Here is a 107-residue protein sequence, read N- to C-terminus: Guanylin (107 aa).

The N-terminal stretch at Met1 to Ala20 is a signal peptide. The propeptide occupies Val21 to Asp92. Disulfide bonds link Cys61–Cys74, Cys96–Cys104, and Cys99–Cys107.

The protein belongs to the guanylin family.

Its subcellular location is the secreted. Its function is as follows. Endogenous activator of intestinal guanylate cyclase. It stimulates this enzyme through the same receptor binding region as the heat-stable enterotoxins. In Cavia porcellus (Guinea pig), this protein is Guanylin (GUCA2A).